Reading from the N-terminus, the 196-residue chain is MADPSGSHLRAVILAGGAGRRLGGVDKALLILHGRTMLDHAIATVSGQVGAVALSAAGDPARFARFGIPVLEDGRHRGKGPLAGVLAGMRWAAASGGETLLSLPVDTPFAPRDLAARLGAAPAVAASHGRTHHLVALWPVAAADALERFLDGPGPYRVSGFAAEIGMRAVAFADERDPFVNINTQADLDAAEAGRC.

GTP-binding positions include 14–16 (LAG), Lys-27, Asp-73, and Asp-106. Asp-106 contributes to the Mg(2+) binding site.

This sequence belongs to the MobA family. Monomer. It depends on Mg(2+) as a cofactor.

The protein localises to the cytoplasm. The enzyme catalyses Mo-molybdopterin + GTP + H(+) = Mo-molybdopterin guanine dinucleotide + diphosphate. Transfers a GMP moiety from GTP to Mo-molybdopterin (Mo-MPT) cofactor (Moco or molybdenum cofactor) to form Mo-molybdopterin guanine dinucleotide (Mo-MGD) cofactor. In Acidiphilium cryptum (strain JF-5), this protein is Molybdenum cofactor guanylyltransferase.